The sequence spans 353 residues: Photosystem II D2 protein (353 aa).

An N-acetylthreonine modification is found at Thr2. Thr2 is subject to Phosphothreonine. A helical membrane pass occupies residues 41–61; it reads CAYFALGGWFTGTTFVTSWYT. His118 contributes to the chlorophyll a binding site. The chain crosses the membrane as a helical span at residues 125 to 141; it reads GFMLRQFELARSVQLRP. Pheophytin a is bound by residues Gln130 and Asn143. The chain crosses the membrane as a helical span at residues 153–166; it reads VFVSVFLIYPLGQS. His198 serves as a coordination point for chlorophyll a. A helical membrane pass occupies residues 208-228; that stretch reads AALLCAIHGATVENTLFEDGD. Positions 215 and 262 each coordinate a plastoquinone. Residue His215 participates in Fe cation binding. His269 is a binding site for Fe cation. The helical transmembrane segment at 279–295 threads the bilayer; it reads GLWMSAIGVVGLALNLR.

The protein belongs to the reaction center PufL/M/PsbA/D family. In terms of assembly, PSII is composed of 1 copy each of membrane proteins PsbA, PsbB, PsbC, PsbD, PsbE, PsbF, PsbH, PsbI, PsbJ, PsbK, PsbL, PsbM, PsbT, PsbX, PsbY, PsbZ, Psb30/Ycf12, at least 3 peripheral proteins of the oxygen-evolving complex and a large number of cofactors. It forms dimeric complexes. The D1/D2 heterodimer binds P680, chlorophylls that are the primary electron donor of PSII, and subsequent electron acceptors. It shares a non-heme iron and each subunit binds pheophytin, quinone, additional chlorophylls, carotenoids and lipids. There is also a Cl(-1) ion associated with D1 and D2, which is required for oxygen evolution. The PSII complex binds additional chlorophylls, carotenoids and specific lipids. is required as a cofactor.

It localises to the plastid. The protein localises to the chloroplast thylakoid membrane. It catalyses the reaction 2 a plastoquinone + 4 hnu + 2 H2O = 2 a plastoquinol + O2. Its function is as follows. Photosystem II (PSII) is a light-driven water:plastoquinone oxidoreductase that uses light energy to abstract electrons from H(2)O, generating O(2) and a proton gradient subsequently used for ATP formation. It consists of a core antenna complex that captures photons, and an electron transfer chain that converts photonic excitation into a charge separation. The D1/D2 (PsbA/PsbD) reaction center heterodimer binds P680, the primary electron donor of PSII as well as several subsequent electron acceptors. D2 is needed for assembly of a stable PSII complex. This is Photosystem II D2 protein from Saccharum hybrid (Sugarcane).